The following is a 476-amino-acid chain: WD repeat, SAM and U-box domain-containing protein 1 (476 aa).

WD repeat units follow at residues 10-47 (DHGDDVNCCAFSFSLLATCSLDKTIRLYSLRDFTELPH), 52-91 (FHTYAVHCCCFSPSGHILASCSTDGTTVLWNTENGQMLAV), 95-134 (PSGSPVRVCQFSPDSTCLASGAADGTVVLWNAQSYKLYRC), 137-176 (VKDGSLAACAFSPNGSFFVTGSSCGDLTVWDDKMRCLHSE), 178-228 (AHDL…LGFE), 237-276 (GHCAPVLACAFSHDGQMLVSGSVDKSVIVYDTNTENILHT), and 279-318 (QHTRYVTTCAFAPNTLLLATGSMDKTVNIWQFDLETLCQA). An SAM domain is found at 332–396 (WSEEDVSTWL…LRKIEELRTK (65 aa)). The U-box domain occupies 403–476 (GIPDEFICPI…INRWLETHQK (74 aa)). Thr-458 is modified (phosphothreonine).

In Homo sapiens (Human), this protein is WD repeat, SAM and U-box domain-containing protein 1 (WDSUB1).